The following is a 266-amino-acid chain: uncharacterized protein (266 aa).

This is an uncharacterized protein from Acanthamoeba polyphaga (Amoeba).